A 161-amino-acid polypeptide reads, in one-letter code: Ubiquitin-conjugating enzyme E2Q-like protein 1 (161 aa).

One can recognise a UBC core domain in the interval 1 to 154 (MKELQDIARL…VKTHEKYGWV (154 aa)). Residue C88 is the Glycyl thioester intermediate of the active site.

It belongs to the ubiquitin-conjugating enzyme family. Interacts with FBXW7.

Its subcellular location is the nucleus. The catalysed reaction is S-ubiquitinyl-[E1 ubiquitin-activating enzyme]-L-cysteine + [E2 ubiquitin-conjugating enzyme]-L-cysteine = [E1 ubiquitin-activating enzyme]-L-cysteine + S-ubiquitinyl-[E2 ubiquitin-conjugating enzyme]-L-cysteine.. It functions in the pathway protein modification; protein ubiquitination. Probable E2 ubiquitin-protein ligase that catalyzes the covalent attachment of ubiquitin to target proteins. May facilitate the monoubiquitination and degradation of MTOR and CCNE1 through interaction with FBXW7. This is Ubiquitin-conjugating enzyme E2Q-like protein 1 (Ube2ql1) from Mus musculus (Mouse).